Here is a 205-residue protein sequence, read N- to C-terminus: Dephospho-CoA kinase (205 aa).

The DPCK domain maps to 7 to 205; that stretch reads IIGVTGRIAS…QGIINYERFE (199 aa). 15–20 serves as a coordination point for ATP; it reads ASGKDT.

It belongs to the CoaE family.

It is found in the cytoplasm. It catalyses the reaction 3'-dephospho-CoA + ATP = ADP + CoA + H(+). The protein operates within cofactor biosynthesis; coenzyme A biosynthesis; CoA from (R)-pantothenate: step 5/5. Functionally, catalyzes the phosphorylation of the 3'-hydroxyl group of dephosphocoenzyme A to form coenzyme A. This Borreliella burgdorferi (strain ATCC 35210 / DSM 4680 / CIP 102532 / B31) (Borrelia burgdorferi) protein is Dephospho-CoA kinase.